The primary structure comprises 447 residues: GTPase Era, mitochondrial (447 aa).

The transit peptide at 1–18 (MTLRSCETFLRRSLRFST) directs the protein to the mitochondrion. The Era-type G domain maps to 109 to 340 (KSLKVAIVGS…RYLFVAAKPC (232 aa)). The interval 117-124 (GSPNAGKS) is G1. GTP is bound at residue 117–124 (GSPNAGKS). Residues 143–147 (HTTRS) are G2. The interval 164-167 (DTPG) is G3. GTP is bound by residues 164–168 (DTPGL) and 233–236 (NKVD). Residues 233–236 (NKVD) are G4. Residues 318-320 (LSS) form a G5 region. The KH type-2 domain maps to 370–447 (LPKEVPYTMT…RLKISVKLRK (78 aa)).

Belongs to the TRAFAC class TrmE-Era-EngA-EngB-Septin-like GTPase superfamily. Era GTPase family.

It localises to the mitochondrion matrix. The protein localises to the mitochondrion inner membrane. Its function is as follows. Probable GTPase that plays a role in the mitochondrial ribosomal small subunit assembly. Specifically binds the 12S mitochondrial rRNA (12S mt-rRNA) to a 33 nucleotide section delineating the 3' terminal stem-loop region. May act as a chaperone that protects the 12S mt-rRNA on the 28S mitoribosomal subunit during ribosomal small subunit assembly. The sequence is that of GTPase Era, mitochondrial (eral1) from Danio rerio (Zebrafish).